A 961-amino-acid chain; its full sequence is Thrombospondin-4 (961 aa).

The signal sequence occupies residues 1 to 23 (MLAPRGATFLLLHLALQPWLGAG). A Laminin G-like domain is found at 24–192 (AQATPQVFDL…LEELKLVVRG (169 aa)). An EGF-like 1 domain is found at 286-325 (PVRRCDSNPCFRGVRCTDTRDGFQCGPCPEGYTGNGIVCS). Intrachain disulfides connect C290-C301, C295-C310, C313-C324, C330-C341, C335-C350, C353-C377, C383-C394, C388-C403, C406-C418, C424-C438, C432-C448, C450-C461, C477-C482, C487-C507, C523-C543, C546-C566, C582-C602, C605-C625, C643-C663, C683-C703, and C719-C940. The EGF-like 2; calcium-binding domain maps to 326-363 (DVDECRYHPCYPGVRCVNLAPGFRCDACPVGFTGPMMQ). Positions 379-419 (DIDECRNGACVLNSICINTLGSYRCGPCKPGYIGDQMRGCK) constitute an EGF-like 3; calcium-binding domain. Residues 420-462 (MERNCRDPELNPCSVNAQCIEERQGDVTCVCGVGWAGDGYICG) enclose the EGF-like 4 domain. TSP type-3 repeat units lie at residues 463–495 (KDVD…NSGQ), 496–531 (EDAD…NVDQ), 532–554 (RNSD…NNDQ), 555–590 (KDTD…NSDQ), 591–613 (EDRD…NPNQ), 614–651 (SDVD…NSAQ), 652–691 (LDTD…NPAQ), and 692–727 (EDSN…EVTL). Residues 562 to 564 (KGD) carry the Cell attachment site motif. Positions 581-671 (NCQKVPNSDQ…ECDDDDDNDG (91 aa)) are disordered. Residue N612 is glycosylated (N-linked (GlcNAc...) asparagine). The span at 640 to 652 (TDNCPTVINSAQL) shows a compositional bias: polar residues. Acidic residues predominate over residues 660–671 (GDECDDDDDNDG). Residues 731–945 (RAYQTVVLDP…LKYRCNDTIP (215 aa)) enclose the TSP C-terminal domain. N-linked (GlcNAc...) asparagine glycosylation is present at N941.

The protein belongs to the thrombospondin family. As to quaternary structure, homopentamer; disulfide-linked. Interacts with PTBP3. Interacts (via EGF-like 3; calcium-binding domain) with ATF6 and facilitates its processing, activation and nuclear translocation. Interacts with NOTCH1.

It is found in the endoplasmic reticulum. The protein resides in the sarcoplasmic reticulum. The protein localises to the secreted. Its subcellular location is the extracellular space. It localises to the extracellular matrix. Its function is as follows. Adhesive glycoprotein that mediates cell-to-cell and cell-to-matrix interactions and is involved in various processes including cellular proliferation, migration, adhesion and attachment, inflammatory response to CNS injury, regulation of vascular inflammation and adaptive responses of the heart to pressure overload and in myocardial function and remodeling. Binds to structural extracellular matrix (ECM) proteins and modulates the ECM in response to tissue damage, contributing to cardioprotective and adaptive ECM remodeling. Plays a role in ER stress response, via its interaction with the activating transcription factor 6 alpha (ATF6) which produces adaptive ER stress response factors and protects myocardium from pressure overload. May contribute to spinal presynaptic hypersensitivity and neuropathic pain states after peripheral nerve injury. May play a role in regulating protective astrogenesis from the subventricular zone (SVZ) niche after injury in a NOTCH1-dependent manner. This Bos taurus (Bovine) protein is Thrombospondin-4 (THBS4).